A 399-amino-acid polypeptide reads, in one-letter code: Protein translocase subunit SecD (399 aa).

Helical transmembrane passes span 7–27 (IKTA…LTFP), 239–259 (VIGA…LGLV), 262–282 (IALL…NATL), 286–306 (GVAG…LIFA), 329–351 (ALRA…FYFG), and 357–381 (GFAV…RTLL).

It belongs to the SecD/SecF family. SecD subfamily. In terms of assembly, forms a complex with SecF. Part of the essential Sec protein translocation apparatus which comprises SecA, SecYEG and auxiliary proteins SecDF. Other proteins may also be involved.

It localises to the cell inner membrane. In terms of biological role, part of the Sec protein translocase complex. Interacts with the SecYEG preprotein conducting channel. SecDF uses the proton motive force (PMF) to complete protein translocation after the ATP-dependent function of SecA. This is Protein translocase subunit SecD from Dictyoglomus turgidum (strain DSM 6724 / Z-1310).